Here is an 875-residue protein sequence, read N- to C-terminus: Neurotrypsin (875 aa).

An N-terminal signal peptide occupies residues 1–20 (MTLARFVLALVLGALPEVVX). The N-linked (GlcNAc...) asparagine glycan is linked to Asn26. Residues 31 to 88 (HRPRHSPPTGPHYPYYLPTQQRPPRTRPPPPLPRFPRPPRALPAQRPHALQAGHTPRP) form a disordered region. The segment covering 56–71 (TRPPPPLPRFPRPPRA) has biased composition (pro residues). A Kringle domain is found at 93-165 (CPAGEPWVSV…GKVDWGYCDC (73 aa)). Disulfide bonds link Cys93–Cys165, Cys109–Cys149, Cys138–Cys163, Cys195–Cys259, Cys208–Cys269, Cys239–Cys249, Cys305–Cys369, Cys318–Cys379, Cys349–Cys359, Cys412–Cys475, Cys425–Cys485, Cys455–Cys465, Cys525–Cys589, Cys538–Cys599, Cys569–Cys579, Cys619–Cys750, Cys661–Cys677, Cys765–Cys831, Cys794–Cys808, and Cys821–Cys850. SRCR domains follow at residues 170-271 (IRLR…TCSF), 280-381 (IRLV…SCTP), 387-487 (IRLA…ACYP), and 500-601 (VRLM…ICDY). The interval 619 to 630 (CGLRLLHRRQKR) is zymogen activation region. In terms of domain architecture, Peptidase S1 spans 631–874 (IIGGKNSLRG…FVPWIKSVTK (244 aa)). His676 serves as the catalytic Charge relay system. N-linked (GlcNAc...) asparagine glycosylation occurs at Asn683. The Charge relay system role is filled by Asp726. Ser825 (charge relay system) is an active-site residue.

The protein belongs to the peptidase S1 family.

The protein resides in the secreted. Plays a role in neuronal plasticity and the proteolytic action may subserve structural reorganizations associated with learning and memory operations. The sequence is that of Neurotrypsin (PRSS12) from Nomascus leucogenys (Northern white-cheeked gibbon).